Reading from the N-terminus, the 351-residue chain is Uroporphyrinogen decarboxylase (351 aa).

Residues 25–29, phenylalanine 43, aspartate 74, tyrosine 151, serine 206, and histidine 325 each bind substrate; that span reads RQAGR.

It belongs to the uroporphyrinogen decarboxylase family. In terms of assembly, homodimer.

The protein localises to the cytoplasm. It carries out the reaction uroporphyrinogen III + 4 H(+) = coproporphyrinogen III + 4 CO2. It functions in the pathway porphyrin-containing compound metabolism; protoporphyrin-IX biosynthesis; coproporphyrinogen-III from 5-aminolevulinate: step 4/4. Its function is as follows. Catalyzes the decarboxylation of four acetate groups of uroporphyrinogen-III to yield coproporphyrinogen-III. The chain is Uroporphyrinogen decarboxylase from Chlorobaculum tepidum (strain ATCC 49652 / DSM 12025 / NBRC 103806 / TLS) (Chlorobium tepidum).